The following is a 152-amino-acid chain: Ribosome maturation factor RimP (152 aa).

This sequence belongs to the RimP family.

Its subcellular location is the cytoplasm. Required for maturation of 30S ribosomal subunits. The sequence is that of Ribosome maturation factor RimP from Escherichia coli (strain K12 / MC4100 / BW2952).